The sequence spans 406 residues: Aminomethyltransferase, mitochondrial (406 aa).

Residues 1 to 29 (MRGGLWQLGQSITRRLAQADKKTIGRRCF) constitute a mitochondrion transit peptide. Substrate-binding residues include Glu-234, Arg-265, and Tyr-403.

The protein belongs to the GcvT family. In terms of assembly, the glycine cleavage system is composed of four proteins: P, T, L and H.

The protein localises to the mitochondrion. The enzyme catalyses N(6)-[(R)-S(8)-aminomethyldihydrolipoyl]-L-lysyl-[protein] + (6S)-5,6,7,8-tetrahydrofolate = N(6)-[(R)-dihydrolipoyl]-L-lysyl-[protein] + (6R)-5,10-methylene-5,6,7,8-tetrahydrofolate + NH4(+). Functionally, the glycine cleavage system catalyzes the degradation of glycine. The polypeptide is Aminomethyltransferase, mitochondrial (GDCST) (Solanum tuberosum (Potato)).